Here is a 459-residue protein sequence, read N- to C-terminus: tRNA modification GTPase MnmE (459 aa).

Positions 20, 85, and 124 each coordinate (6S)-5-formyl-5,6,7,8-tetrahydrofolate. A TrmE-type G domain is found at 221 to 380; sequence GLSTVIIGRP…LEMAIQSLFF (160 aa). N231 serves as a coordination point for K(+). GTP is bound by residues 231–236, 250–256, and 275–278; these read NVGKSS, TDIPGTT, and DTAG. Residue S235 coordinates Mg(2+). 3 residues coordinate K(+): T250, I252, and T255. Residue T256 participates in Mg(2+) binding. K459 provides a ligand contact to (6S)-5-formyl-5,6,7,8-tetrahydrofolate.

The protein belongs to the TRAFAC class TrmE-Era-EngA-EngB-Septin-like GTPase superfamily. TrmE GTPase family. Homodimer. Heterotetramer of two MnmE and two MnmG subunits. K(+) serves as cofactor.

The protein resides in the cytoplasm. Its function is as follows. Exhibits a very high intrinsic GTPase hydrolysis rate. Involved in the addition of a carboxymethylaminomethyl (cmnm) group at the wobble position (U34) of certain tRNAs, forming tRNA-cmnm(5)s(2)U34. In Bacillus pumilus (strain SAFR-032), this protein is tRNA modification GTPase MnmE.